Consider the following 418-residue polypeptide: UDP-N-acetylglucosamine 1-carboxyvinyltransferase (418 aa).

22 to 23 (KN) is a phosphoenolpyruvate binding site. Arg-92 contacts UDP-N-acetyl-alpha-D-glucosamine. Cys-116 serves as the catalytic Proton donor. The residue at position 116 (Cys-116) is a 2-(S-cysteinyl)pyruvic acid O-phosphothioketal. UDP-N-acetyl-alpha-D-glucosamine-binding positions include 121-125 (RPIDL), Asp-305, and Leu-327.

Belongs to the EPSP synthase family. MurA subfamily.

Its subcellular location is the cytoplasm. It catalyses the reaction phosphoenolpyruvate + UDP-N-acetyl-alpha-D-glucosamine = UDP-N-acetyl-3-O-(1-carboxyvinyl)-alpha-D-glucosamine + phosphate. Its pathway is cell wall biogenesis; peptidoglycan biosynthesis. Cell wall formation. Adds enolpyruvyl to UDP-N-acetylglucosamine. This is UDP-N-acetylglucosamine 1-carboxyvinyltransferase from Campylobacter jejuni subsp. jejuni serotype O:23/36 (strain 81-176).